Here is a 144-residue protein sequence, read N- to C-terminus: MLKGIHPAISPDLLKILAEMGHGDELVLSDAHFPAHQLHHKVVRADGISINSLLTGITPLFEFDTYTEAPLIMMQAVEGDSLDPAVEQSYLQTIKSAVGNVPKLARMDRFAFYERAKQAYAVVITGETAKYGNIIIKKGVTPVK.

The active-site Proton donor is the histidine 22. Substrate-binding positions include aspartate 30, arginine 109, and tyrosine 131–asparagine 133.

This sequence belongs to the RbsD / FucU family. FucU mutarotase subfamily. As to quaternary structure, homodecamer.

It is found in the cytoplasm. It carries out the reaction alpha-L-fucose = beta-L-fucose. The protein operates within carbohydrate metabolism; L-fucose metabolism. Its function is as follows. Involved in the anomeric conversion of L-fucose. This Histophilus somni (strain 2336) (Haemophilus somnus) protein is L-fucose mutarotase.